The primary structure comprises 309 residues: Malate dehydrogenase (309 aa).

Residues 9–14 (GAGFVG) and D33 contribute to the NAD(+) site. Substrate is bound by residues R82 and R88. Residues N95 and 118–120 (VNN) contribute to the NAD(+) site. N120 and R151 together coordinate substrate. The active-site Proton acceptor is H175.

This sequence belongs to the LDH/MDH superfamily. MDH type 3 family.

The enzyme catalyses (S)-malate + NAD(+) = oxaloacetate + NADH + H(+). Catalyzes the reversible oxidation of malate to oxaloacetate. The polypeptide is Malate dehydrogenase (Chloroflexus aurantiacus (strain ATCC 29364 / DSM 637 / Y-400-fl)).